Reading from the N-terminus, the 56-residue chain is Large ribosomal subunit protein bL32 (56 aa).

The segment at 1–26 (MAVQKSKVTRSRRGQRRSHDALTAAA) is disordered. Residues 7–16 (KVTRSRRGQR) show a composition bias toward basic residues.

This sequence belongs to the bacterial ribosomal protein bL32 family.

The sequence is that of Large ribosomal subunit protein bL32 (rpmF) from Moritella marina (Vibrio marinus).